The chain runs to 213 residues: Uracil phosphoribosyltransferase (213 aa).

5-phospho-alpha-D-ribose 1-diphosphate contacts are provided by residues Arg-78, Arg-103, and 131 to 139 (DPMLATGGT). Uracil contacts are provided by residues Ile-197 and 202–204 (GDA). Asp-203 contributes to the 5-phospho-alpha-D-ribose 1-diphosphate binding site.

Belongs to the UPRTase family. Requires Mg(2+) as cofactor.

The enzyme catalyses UMP + diphosphate = 5-phospho-alpha-D-ribose 1-diphosphate + uracil. The protein operates within pyrimidine metabolism; UMP biosynthesis via salvage pathway; UMP from uracil: step 1/1. With respect to regulation, allosterically activated by GTP. In terms of biological role, catalyzes the conversion of uracil and 5-phospho-alpha-D-ribose 1-diphosphate (PRPP) to UMP and diphosphate. This chain is Uracil phosphoribosyltransferase, found in Bifidobacterium longum (strain DJO10A).